The chain runs to 560 residues: Serine palmitoyltransferase 2 (560 aa).

Residues 65-85 (PMLVAVLTYVGYGVLTLFGYL) form a helical membrane-spanning segment. Position 377 is an N6-(pyridoxal phosphate)lysine (lysine 377).

Belongs to the class-II pyridoxal-phosphate-dependent aminotransferase family. Component of the serine palmitoyltransferase (SPT) complex, which is composed of SPTLC1, SPTLC2 or SPTLC3 and SPTSSA or SPTSSB. The heterodimer consisting of SPTLC1 and SPTLC2/SPTLC3 forms the catalytic core of the enzyme, while SPTSSA or SPTSSB subunits determine substrate specificity. SPT also interacts with ORMDL proteins, especially ORMDL3, which negatively regulate SPT activity in the presence of ceramides. Forms dimers of heterodimers with SPTLC1. Pyridoxal 5'-phosphate serves as cofactor.

The protein localises to the endoplasmic reticulum membrane. It carries out the reaction L-serine + hexadecanoyl-CoA + H(+) = 3-oxosphinganine + CO2 + CoA. The catalysed reaction is octadecanoyl-CoA + L-serine + H(+) = 3-oxoeicosasphinganine + CO2 + CoA. It functions in the pathway lipid metabolism; sphingolipid metabolism. Its activity is regulated as follows. SPT complex catalytic activity is negatively regulated by ORMDL proteins, including ORMDL3, in the presence of ceramides. This mechanism allows to maintain ceramide levels at sufficient concentrations for the production of complex sphingolipids, but which prevents the accumulation of ceramides to levels that trigger apoptosis. Its function is as follows. Component of the serine palmitoyltransferase multisubunit enzyme (SPT) that catalyzes the initial and rate-limiting step in sphingolipid biosynthesis by condensing L-serine and activated acyl-CoA (most commonly palmitoyl-CoA) to form long-chain bases. The SPT complex is composed of SPTLC1, SPTLC2 or SPTLC3 and SPTSSA or SPTSSB. Within this complex, the heterodimer consisting of SPTLC1 and SPTLC2/SPTLC3 forms the catalytic core. The composition of the serine palmitoyltransferase (SPT) complex determines the substrate preference. The SPTLC1-SPTLC2-SPTSSA complex shows a strong preference for C16-CoA substrate, while the SPTLC1-SPTLC3-SPTSSA isozyme uses both C14-CoA and C16-CoA as substrates, with a slight preference for C14-CoA. The SPTLC1-SPTLC2-SPTSSB complex shows a strong preference for C18-CoA substrate, while the SPTLC1-SPTLC3-SPTSSB isozyme displays an ability to use a broader range of acyl-CoAs, without apparent preference. Crucial for adipogenesis. This chain is Serine palmitoyltransferase 2 (SPTLC2), found in Cricetulus griseus (Chinese hamster).